The primary structure comprises 444 residues: Tryptophan 5-hydroxylase 1 (444 aa).

Positions 19–94 constitute an ACT domain; sequence TLIFSLKNEV…NVLSVTPPDN (76 aa). At serine 58 the chain carries Phosphoserine; by PKA. Tyrosine 235, arginine 257, and threonine 265 together coordinate L-tryptophan. Histidine 272, histidine 277, and glutamate 317 together coordinate Fe cation. 2 residues coordinate L-tryptophan: serine 336 and isoleucine 366.

The protein belongs to the biopterin-dependent aromatic amino acid hydroxylase family. As to quaternary structure, homotetramer. Interacts with DNAJC12. The cofactor is Fe(2+). In terms of processing, ubiquitinated, leading to its degradation by the proteasome. Ubiquitinated is triggered by phosphorylation. Phosphorylated; triggering degradation by the proteasome.

The catalysed reaction is (6R)-L-erythro-5,6,7,8-tetrahydrobiopterin + L-tryptophan + O2 = 5-hydroxy-L-tryptophan + (4aS,6R)-4a-hydroxy-L-erythro-5,6,7,8-tetrahydrobiopterin. The protein operates within aromatic compound metabolism; serotonin biosynthesis; serotonin from L-tryptophan: step 1/2. Functionally, oxidizes L-tryptophan to 5-hydroxy-l-tryptophan in the rate-determining step of serotonin biosynthesis. The chain is Tryptophan 5-hydroxylase 1 (TPH1) from Oryctolagus cuniculus (Rabbit).